The chain runs to 504 residues: Maturase K (504 aa).

It belongs to the intron maturase 2 family. MatK subfamily.

It localises to the plastid. The protein localises to the chloroplast. Functionally, usually encoded in the trnK tRNA gene intron. Probably assists in splicing its own and other chloroplast group II introns. The chain is Maturase K from Gossypium barbadense (Sea Island cotton).